Here is a 201-residue protein sequence, read N- to C-terminus: Probable thymidylate kinase (201 aa).

10-17 is an ATP binding site; that stretch reads GIDGSGKS.

The protein belongs to the thymidylate kinase family.

The catalysed reaction is dTMP + ATP = dTDP + ADP. This is Probable thymidylate kinase from Methanococcoides burtonii (strain DSM 6242 / NBRC 107633 / OCM 468 / ACE-M).